The following is a 125-amino-acid chain: Small ribosomal subunit protein bS6 (125 aa).

It belongs to the bacterial ribosomal protein bS6 family.

In terms of biological role, binds together with bS18 to 16S ribosomal RNA. The protein is Small ribosomal subunit protein bS6 of Campylobacter jejuni subsp. jejuni serotype O:23/36 (strain 81-176).